Consider the following 422-residue polypeptide: Glycine amidinotransferase, mitochondrial (422 aa).

The N-terminal 37 residues, 1–37, are a transit peptide targeting the mitochondrion; it reads MLRVRCVRGGSRGAEAVHYIGSMLRKGFVGWVQRSFQ. Residues aspartate 253 and histidine 302 contribute to the active site. Catalysis depends on cysteine 406, which acts as the Amidino-cysteine intermediate.

The protein belongs to the amidinotransferase family. As to quaternary structure, homodimer.

It is found in the mitochondrion inner membrane. It carries out the reaction L-arginine + glycine = guanidinoacetate + L-ornithine. It functions in the pathway amine and polyamine biosynthesis; creatine biosynthesis; creatine from L-arginine and glycine: step 1/2. Functionally, catalyzes the biosynthesis of guanidinoacetate, the immediate precursor of creatine. Creatine plays a vital role in energy metabolism in muscle tissues. May play a role in embryonic and central nervous system development. This is Glycine amidinotransferase, mitochondrial from Xenopus tropicalis (Western clawed frog).